A 610-amino-acid chain; its full sequence is DNA mismatch repair protein MutL (610 aa).

The protein belongs to the DNA mismatch repair MutL/HexB family.

Its function is as follows. This protein is involved in the repair of mismatches in DNA. It is required for dam-dependent methyl-directed DNA mismatch repair. May act as a 'molecular matchmaker', a protein that promotes the formation of a stable complex between two or more DNA-binding proteins in an ATP-dependent manner without itself being part of a final effector complex. In Rickettsia canadensis (strain McKiel), this protein is DNA mismatch repair protein MutL.